Reading from the N-terminus, the 806-residue chain is Transitional endoplasmic reticulum ATPase (806 aa).

Residue S3 is modified to Phosphoserine. ATP-binding positions include 247–253 (PGTGKTL), N348, H384, and 521–526 (GCGKTL). Disordered regions lie at residues 708 to 727 (RRER…EDDP) and 768 to 806 (FGSF…DLYG). Residues 768–778 (FGSFRFPSSNQ) are compositionally biased toward low complexity. Residues 779–794 (GGSGPSQGSSGGGGGN) are compositionally biased toward gly residues.

The protein belongs to the AAA ATPase family. In terms of assembly, homohexamer.

It is found in the cytoplasm. The protein resides in the cytosol. It localises to the endoplasmic reticulum. Its subcellular location is the nucleus. It carries out the reaction ATP + H2O = ADP + phosphate + H(+). In terms of biological role, necessary for the fragmentation of Golgi stacks during mitosis and for their reassembly after mitosis. Involved in the formation of the nuclear envelope, and of the transitional endoplasmic reticulum (tER). The transfer of membranes from the endoplasmic reticulum to the Golgi apparatus occurs via 50-70 nm transition vesicles which derive from part-rough, part-smooth transitional elements of the endoplasmic reticulum (tER). Vesicle budding from the tER is an ATP-dependent process. Also involved in DNA damage response: recruited to double-strand breaks (DSBs) sites and promotes the recruitment of tp53bp1 at DNA damage sites. Together with sprtn metalloprotease, involved in the repair of covalent DNA-protein cross-links (DPCs) during DNA synthesis. Involved in interstrand cross-link repair in response to replication stress by mediating unloading of the ubiquitinated CMG helicase complex. Enhances cell cycle progression and inhibits apoptosis at low temperatures. Essential for the maturation of ubiquitin-containing autophagosomes and the clearance of ubiquitinated protein by autophagy. Acts as a negative regulator of type I interferon production by promoting ubiquitination of RIGI. May play a role in the ubiquitin-dependent sorting of membrane proteins to lysosomes where they undergo degradation. May more particularly play a role in caveolins sorting in cells. By controlling the steady-state expression of the IGF1R receptor, indirectly regulates the insulin-like growth factor receptor signaling pathway. This Danio rerio (Zebrafish) protein is Transitional endoplasmic reticulum ATPase.